A 500-amino-acid polypeptide reads, in one-letter code: Cytochrome P450 11B1, mitochondrial (500 aa).

The transit peptide at 1-24 (MAFRLKSDVRLAGSWLCLRGARAL) directs the protein to the mitochondrion. Cys447 serves as a coordination point for heme.

This sequence belongs to the cytochrome P450 family. Heme is required as a cofactor.

It localises to the mitochondrion inner membrane. It catalyses the reaction a steroid + 2 reduced [adrenodoxin] + O2 + 2 H(+) = an 11beta-hydroxysteroid + 2 oxidized [adrenodoxin] + H2O. The enzyme catalyses 11-deoxycortisol + 2 reduced [adrenodoxin] + O2 + 2 H(+) = cortisol + 2 oxidized [adrenodoxin] + H2O. The catalysed reaction is 21-hydroxyprogesterone + 2 reduced [adrenodoxin] + O2 + 2 H(+) = corticosterone + 2 oxidized [adrenodoxin] + H2O. It carries out the reaction 21-hydroxyprogesterone + 2 reduced [adrenodoxin] + O2 + 2 H(+) = 18-hydroxy-11-deoxycorticosterone + 2 oxidized [adrenodoxin] + H2O. It catalyses the reaction 21-hydroxyprogesterone + 2 reduced [adrenodoxin] + O2 + 2 H(+) = 19-hydroxy-11-deoxycorticosterone + 2 oxidized [adrenodoxin] + H2O. The enzyme catalyses cortisol + 2 reduced [adrenodoxin] + O2 + 2 H(+) = 18-hydroxycortisol + 2 oxidized [adrenodoxin] + H2O. The catalysed reaction is 11-deoxycortisol + 2 reduced [adrenodoxin] + O2 + 2 H(+) = 18-hydroxy-11-deoxycortisol + 2 oxidized [adrenodoxin] + H2O. It participates in steroid biosynthesis; glucocorticoid biosynthesis. Its pathway is steroid hormone biosynthesis. In terms of biological role, a cytochrome P450 monooxygenase involved in the biosynthesis of adrenal corticoids. Catalyzes a variety of reactions that are essential for many species, including detoxification, defense, and the formation of endogenous chemicals like steroid hormones. Steroid 11beta, 18- and 19-hydroxylase with preferred regioselectivity at 11beta, then 18, and lastly 19. Catalyzes the hydroxylation of 11-deoxycortisol and 11-deoxycorticosterone (21-hydroxyprogesterone) at 11beta position, yielding cortisol or corticosterone, respectively, but cannot produce aldosterone. Mechanistically, uses molecular oxygen inserting one oxygen atom into a substrate for hydroxylation and reducing the second into a water molecule. Two electrons are provided by NADPH via a two-protein mitochondrial transfer system comprising flavoprotein FDXR (adrenodoxin/ferredoxin reductase) and nonheme iron-sulfur protein FDX1 or FDX2 (adrenodoxin/ferredoxin). Due to its lack of 18-oxidation activity, it is incapable of generating aldosterone. Could also be involved in the androgen metabolic pathway. The protein is Cytochrome P450 11B1, mitochondrial (CYP11B1) of Cavia porcellus (Guinea pig).